A 296-amino-acid polypeptide reads, in one-letter code: Acetylglutamate kinase (296 aa).

Residues 71–72 (GG), arginine 93, and asparagine 186 each bind substrate.

It belongs to the acetylglutamate kinase family. ArgB subfamily.

It is found in the cytoplasm. It carries out the reaction N-acetyl-L-glutamate + ATP = N-acetyl-L-glutamyl 5-phosphate + ADP. It functions in the pathway amino-acid biosynthesis; L-arginine biosynthesis; N(2)-acetyl-L-ornithine from L-glutamate: step 2/4. Functionally, catalyzes the ATP-dependent phosphorylation of N-acetyl-L-glutamate. The protein is Acetylglutamate kinase of Synechococcus sp. (strain RCC307).